The chain runs to 189 residues: Pyridoxal 5'-phosphate synthase subunit PdxT (189 aa).

47 to 49 provides a ligand contact to L-glutamine; it reads GES. Residue Cys-79 is the Nucleophile of the active site. L-glutamine is bound by residues Arg-106 and 135 to 136; that span reads IR. Residues His-171 and Glu-173 each act as charge relay system in the active site.

The protein belongs to the glutaminase PdxT/SNO family. In terms of assembly, in the presence of PdxS, forms a dodecamer of heterodimers. Only shows activity in the heterodimer.

The enzyme catalyses aldehydo-D-ribose 5-phosphate + D-glyceraldehyde 3-phosphate + L-glutamine = pyridoxal 5'-phosphate + L-glutamate + phosphate + 3 H2O + H(+). It catalyses the reaction L-glutamine + H2O = L-glutamate + NH4(+). It functions in the pathway cofactor biosynthesis; pyridoxal 5'-phosphate biosynthesis. Catalyzes the hydrolysis of glutamine to glutamate and ammonia as part of the biosynthesis of pyridoxal 5'-phosphate. The resulting ammonia molecule is channeled to the active site of PdxS. In Thermoanaerobacter pseudethanolicus (strain ATCC 33223 / 39E) (Clostridium thermohydrosulfuricum), this protein is Pyridoxal 5'-phosphate synthase subunit PdxT.